The primary structure comprises 828 residues: MKLSRRSFMKANAVAAAAAAAGLSVPGVARAVVGQQEAIKWDKAPCRFCGTGCGVLVGTQQGRVVACQGDPDAPVNRGLNCIKGYFLPKIMYGKDRLTQPLLRMKNGKYDKEGEFTPITWDQAFDVMEEKFKTALKEKGPESIGMFGSGQWTIWEGYAASKLFKAGFRSNNIDPNARHCMASAVVGFMRTFGMDEPMGCYDDIEQADAFVLWGANMAEMHPILWSRITNRRLSNQNVTVAVLSTYQHRSFELADNGIIFTPQSDLVILNYIANYIIQNNAINQDFFSKHVNLRKGATDIGYGLRPTHPLEKAAKNPGSDASEPMSFEDYKAFVAEYTLEKTAEMTGVPKDQLEQLAQLYADPNKKVISYWTMGFNQHTRGVWANNLVYNLHLLTGKISQPGCGPFSLTGQPSACGTAREVGTFAHRLPADMVVTNEKHRDICEKKWNIPSGTIPAKIGLHAVAQDRALKDGKLNVYWTMCTNNMQAGPNINEERMPGWRDPRNFIIVSDPYPTVSALAADLILPTAMWVEKEGAYGNAERRTQFWRQQVQAPGEAKSDLWQLVQFSRRFKTEEVWPEDLLAKKPELRGKTLYEVLYATPEVSKFPVSELAEDQLNDESRELGFYLQKGLFEEYAWFGRGHGHDLAPFDDYHKARGLRWPVVNGKETQWRYSEGNDPYVKAGEGYKFYGKPDGKAVIFALPFEPAAEAPDEEYDLWLSTGRVLEHWHTGSMTRRVPELHRAFPEAVLFIHPLDAKARDLRRGDKVKVVSRRGEVISIVETRGRNRPPQGLVYMPFFDAAQLVNKLTLDATDPLSKETDFKKCAVKLEKV.

A signal peptide (tat-type signal) is located at residues 1–31; sequence MKLSRRSFMKANAVAAAAAAAGLSVPGVARA. The 4Fe-4S Mo/W bis-MGD-type domain occupies 39–95; it reads IKWDKAPCRFCGTGCGVLVGTQQGRVVACQGDPDAPVNRGLNCIKGYFLPKIMYGKD. [4Fe-4S] cluster contacts are provided by Cys46, Cys49, Cys53, and Cys81. Mo-bis(molybdopterin guanine dinucleotide) is bound by residues Lys83, Gln150, Asn175, Cys179, 212 to 219, 243 to 247, 262 to 264, Met372, Gln376, Asn482, 508 to 509, Lys531, Asp558, and 718 to 727; these read WGANMAEM, STYQH, QSD, SD, and TGRVLEHWHT. Phe794 provides a ligand contact to substrate. Mo-bis(molybdopterin guanine dinucleotide)-binding residues include Asn802 and Lys819.

It belongs to the prokaryotic molybdopterin-containing oxidoreductase family. NasA/NapA/NarB subfamily. In terms of assembly, component of the periplasmic nitrate reductase NapAB complex composed of NapA and NapB. [4Fe-4S] cluster is required as a cofactor. The cofactor is Mo-bis(molybdopterin guanine dinucleotide). In terms of processing, predicted to be exported by the Tat system. The position of the signal peptide cleavage has not been experimentally proven.

The protein resides in the periplasm. It catalyses the reaction 2 Fe(II)-[cytochrome] + nitrate + 2 H(+) = 2 Fe(III)-[cytochrome] + nitrite + H2O. Functionally, catalytic subunit of the periplasmic nitrate reductase complex NapAB. Receives electrons from NapB and catalyzes the reduction of nitrate to nitrite. This Escherichia coli (strain K12 / MC4100 / BW2952) protein is Periplasmic nitrate reductase.